The chain runs to 248 residues: DNA repair protein RecO (248 aa).

The protein belongs to the RecO family.

Involved in DNA repair and RecF pathway recombination. The protein is DNA repair protein RecO of Bradyrhizobium sp. (strain BTAi1 / ATCC BAA-1182).